A 523-amino-acid polypeptide reads, in one-letter code: 2-isopropylmalate synthase (523 aa).

Residues 5 to 267 (VIIFDTTLRD…HTAINHQEIW (263 aa)) form the Pyruvate carboxyltransferase domain. The Mn(2+) site is built by Asp-14, His-202, His-204, and Asn-238. Residues 392 to 523 (RLDYFSVQSG…QHNENNKETV (132 aa)) form a regulatory domain region.

The protein belongs to the alpha-IPM synthase/homocitrate synthase family. LeuA type 1 subfamily. Homodimer. Requires Mn(2+) as cofactor.

The protein resides in the cytoplasm. The enzyme catalyses 3-methyl-2-oxobutanoate + acetyl-CoA + H2O = (2S)-2-isopropylmalate + CoA + H(+). Its pathway is amino-acid biosynthesis; L-leucine biosynthesis; L-leucine from 3-methyl-2-oxobutanoate: step 1/4. In terms of biological role, catalyzes the condensation of the acetyl group of acetyl-CoA with 3-methyl-2-oxobutanoate (2-ketoisovalerate) to form 3-carboxy-3-hydroxy-4-methylpentanoate (2-isopropylmalate). The sequence is that of 2-isopropylmalate synthase from Shigella flexneri.